Reading from the N-terminus, the 89-residue chain is Small ribosomal subunit protein uS15 (89 aa).

The protein belongs to the universal ribosomal protein uS15 family. Part of the 30S ribosomal subunit. Forms a bridge to the 50S subunit in the 70S ribosome, contacting the 23S rRNA.

One of the primary rRNA binding proteins, it binds directly to 16S rRNA where it helps nucleate assembly of the platform of the 30S subunit by binding and bridging several RNA helices of the 16S rRNA. Its function is as follows. Forms an intersubunit bridge (bridge B4) with the 23S rRNA of the 50S subunit in the ribosome. The polypeptide is Small ribosomal subunit protein uS15 (Kineococcus radiotolerans (strain ATCC BAA-149 / DSM 14245 / SRS30216)).